The following is a 247-amino-acid chain: Aliphatic sulfonates import ATP-binding protein SsuB 3 (247 aa).

The 215-residue stretch at 28–242 folds into the ABC transporter domain; that stretch reads VSVRGLQRRY…ALRSILLEEL (215 aa). 60–67 contributes to the ATP binding site; that stretch reads GESGCGKT.

The protein belongs to the ABC transporter superfamily. Aliphatic sulfonates importer (TC 3.A.1.17.2) family. The complex is composed of two ATP-binding proteins (SsuB), two transmembrane proteins (SsuC) and a solute-binding protein (SsuA).

Its subcellular location is the cell inner membrane. The catalysed reaction is ATP + H2O + aliphatic sulfonate-[sulfonate-binding protein]Side 1 = ADP + phosphate + aliphatic sulfonateSide 2 + [sulfonate-binding protein]Side 1.. Its function is as follows. Part of the ABC transporter complex SsuABC involved in aliphatic sulfonates import. Responsible for energy coupling to the transport system. This is Aliphatic sulfonates import ATP-binding protein SsuB 3 from Paraburkholderia xenovorans (strain LB400).